A 330-amino-acid chain; its full sequence is Virulence plasmid integrase pGP8-D (330 aa).

The Core-binding (CB) domain occupies 39–124 (FSLFEVIMHW…SYISLTRFLN (86 aa)). In terms of domain architecture, Tyr recombinase spans 152–327 (VKTDAMNSLQ…SREDNASKKM (176 aa)). Catalysis depends on residues R189, K214, H279, R282, and H305. The active-site O-(3'-phospho-DNA)-tyrosine intermediate is Y314.

It belongs to the 'phage' integrase family.

The polypeptide is Virulence plasmid integrase pGP8-D (Chlamydia trachomatis serovar L2 (strain ATCC VR-902B / DSM 19102 / 434/Bu)).